A 43-amino-acid polypeptide reads, in one-letter code: Iota-conotoxin-like S11.2 (43 aa).

4 disulfides stabilise this stretch: cysteine 2–cysteine 16, cysteine 9–cysteine 19, cysteine 15–cysteine 24, and cysteine 18–cysteine 35. At methionine 41 the chain carries D-methionine. A propeptide (removed by a carboxypeptidase) is located at residue arginine 43.

Belongs to the conotoxin I1 superfamily. In terms of tissue distribution, expressed by the venom duct.

The protein resides in the secreted. In terms of biological role, iota-conotoxins bind to voltage-gated sodium channels (Nav) and act as agonists by shifting the voltage-dependence of activation to more hyperpolarized levels. Produces general excitatory symptoms. The chain is Iota-conotoxin-like S11.2 from Conus striatus (Striated cone).